We begin with the raw amino-acid sequence, 178 residues long: MAELITVARPYAEAVFRLAKDEGRLAQWSEALAWLAASLAEPAVSAAVANPERTEAEVVTLLGGILGDKAGHEVRNLLEALAENHRLALLPAIAEQFEQLKQVEEGVLTADIASAYPLTEAQSAELAATLKAKYGKEIVLKASVDPSLIGGVRILVGDEVIDASVRGKLHTMAISLKS.

This sequence belongs to the ATPase delta chain family. As to quaternary structure, F-type ATPases have 2 components, F(1) - the catalytic core - and F(0) - the membrane proton channel. F(1) has five subunits: alpha(3), beta(3), gamma(1), delta(1), epsilon(1). F(0) has three main subunits: a(1), b(2) and c(10-14). The alpha and beta chains form an alternating ring which encloses part of the gamma chain. F(1) is attached to F(0) by a central stalk formed by the gamma and epsilon chains, while a peripheral stalk is formed by the delta and b chains.

The protein localises to the cell inner membrane. Functionally, f(1)F(0) ATP synthase produces ATP from ADP in the presence of a proton or sodium gradient. F-type ATPases consist of two structural domains, F(1) containing the extramembraneous catalytic core and F(0) containing the membrane proton channel, linked together by a central stalk and a peripheral stalk. During catalysis, ATP synthesis in the catalytic domain of F(1) is coupled via a rotary mechanism of the central stalk subunits to proton translocation. Its function is as follows. This protein is part of the stalk that links CF(0) to CF(1). It either transmits conformational changes from CF(0) to CF(1) or is implicated in proton conduction. The sequence is that of ATP synthase subunit delta from Laribacter hongkongensis (strain HLHK9).